The chain runs to 21 residues: Large ribosomal subunit protein uL29 (21 aa).

This sequence belongs to the universal ribosomal protein uL29 family.

This chain is Large ribosomal subunit protein uL29 (rpmC), found in Brevundimonas diminuta (Pseudomonas diminuta).